The chain runs to 265 residues: Glycosylphosphatidylinositol anchor biosynthesis protein 11 (265 aa).

The next 2 helical transmembrane spans lie at 49 to 69 (LLVV…SGLT) and 79 to 99 (GFLT…INLL). Residues Asn-111 and Asn-112 are each glycosylated (N-linked (GlcNAc...) asparagine). Helical transmembrane passes span 137–157 (IFVS…MGAP), 166–186 (LYLS…LSNL), 209–229 (ILSS…PIPL), and 240–260 (ITLL…SLIV).

The protein belongs to the PIGF family.

It is found in the endoplasmic reticulum membrane. Its pathway is glycolipid biosynthesis; glycosylphosphatidylinositol-anchor biosynthesis. Its function is as follows. Acts in the GPI biosynthetic pathway between GlcNAc-PI synthesis and GPI transfer to protein. The polypeptide is Glycosylphosphatidylinositol anchor biosynthesis protein 11 (GPI11) (Candida albicans (strain SC5314 / ATCC MYA-2876) (Yeast)).